Reading from the N-terminus, the 336-residue chain is Fructose-1,6-bisphosphatase class 1 (336 aa).

Mg(2+) contacts are provided by Glu-92, Asp-115, Leu-117, and Asp-118. Substrate-binding positions include 118–121, Asn-211, Tyr-244, 262–264, and Lys-274; these read DGSS and YLY. Residue Glu-280 participates in Mg(2+) binding.

Belongs to the FBPase class 1 family. As to quaternary structure, homotetramer. It depends on Mg(2+) as a cofactor.

The protein resides in the cytoplasm. The catalysed reaction is beta-D-fructose 1,6-bisphosphate + H2O = beta-D-fructose 6-phosphate + phosphate. It participates in carbohydrate biosynthesis; gluconeogenesis. The chain is Fructose-1,6-bisphosphatase class 1 from Vibrio cholerae serotype O1 (strain ATCC 39315 / El Tor Inaba N16961).